Reading from the N-terminus, the 204-residue chain is Large ribosomal subunit protein eL15z (204 aa).

The tract at residues 161 to 204 (LRGLTSEGKKNRGLRGKGHNNHKNRPSRRATWKKNNSLSLRRYR) is disordered. A compositionally biased stretch (basic residues) spans 171-192 (NRGLRGKGHNNHKNRPSRRATW). Positions 193-204 (KKNNSLSLRRYR) are enriched in polar residues.

It belongs to the eukaryotic ribosomal protein eL15 family.

The sequence is that of Large ribosomal subunit protein eL15z (RPL15A) from Arabidopsis thaliana (Mouse-ear cress).